The sequence spans 793 residues: Ent-copalyl diphosphate synthase, chloroplastic (793 aa).

A chloroplast-targeting transit peptide spans 1–47; the sequence is MPLASNPVAFLPSSTAHGDLPAAAFSRSSAGCLQLCRPLTPTSSLQC. Asp372 and Asp374 together coordinate Mg(2+). The DXDD motif signature appears at 372-375; that stretch reads DIDD.

The protein belongs to the terpene synthase family. Requires Mg(2+) as cofactor.

The protein resides in the plastid. It localises to the chloroplast. It carries out the reaction (2E,6E,10E)-geranylgeranyl diphosphate = ent-copalyl diphosphate. Its pathway is plant hormone biosynthesis; gibberellin biosynthesis. Catalyzes the conversion of geranylgeranyl diphosphate (GGPP) to the gibberellin precursor ent-copalyl diphosphate (CPP). This is Ent-copalyl diphosphate synthase, chloroplastic from Salvia miltiorrhiza (Chinese sage).